The primary structure comprises 298 residues: UDP-3-O-acyl-N-acetylglucosamine deacetylase (298 aa).

Zn(2+) is bound by residues H75, H232, and D236. H259 functions as the Proton donor in the catalytic mechanism.

The protein belongs to the LpxC family. The cofactor is Zn(2+).

It catalyses the reaction a UDP-3-O-[(3R)-3-hydroxyacyl]-N-acetyl-alpha-D-glucosamine + H2O = a UDP-3-O-[(3R)-3-hydroxyacyl]-alpha-D-glucosamine + acetate. Its pathway is glycolipid biosynthesis; lipid IV(A) biosynthesis; lipid IV(A) from (3R)-3-hydroxytetradecanoyl-[acyl-carrier-protein] and UDP-N-acetyl-alpha-D-glucosamine: step 2/6. Catalyzes the hydrolysis of UDP-3-O-myristoyl-N-acetylglucosamine to form UDP-3-O-myristoylglucosamine and acetate, the committed step in lipid A biosynthesis. This is UDP-3-O-acyl-N-acetylglucosamine deacetylase from Wolinella succinogenes (strain ATCC 29543 / DSM 1740 / CCUG 13145 / JCM 31913 / LMG 7466 / NCTC 11488 / FDC 602W) (Vibrio succinogenes).